The following is a 228-amino-acid chain: Ribosomal RNA small subunit methyltransferase G (228 aa).

S-adenosyl-L-methionine is bound by residues glycine 70, leucine 75, 120 to 121 (AE), and arginine 138. Positions 207 to 228 (RRGDTRGPNRRVSPRRTGGAPA) are disordered.

The protein belongs to the methyltransferase superfamily. RNA methyltransferase RsmG family.

The protein localises to the cytoplasm. Functionally, specifically methylates the N7 position of guanine in position 518 of 16S rRNA. In Mycobacterium marinum (strain ATCC BAA-535 / M), this protein is Ribosomal RNA small subunit methyltransferase G.